Reading from the N-terminus, the 876-residue chain is DNA polymerase 1 (876 aa).

This sequence belongs to the DNA polymerase type-B family.

The enzyme catalyses DNA(n) + a 2'-deoxyribonucleoside 5'-triphosphate = DNA(n+1) + diphosphate. Functionally, this polymerase possesses two enzymatic activities: DNA synthesis (polymerase) and an exonucleolytic activity that degrades single-stranded DNA in the 3'- to 5'-direction. The protein is DNA polymerase 1 (dpo1) of Sulfolobus acidocaldarius (strain ATCC 33909 / DSM 639 / JCM 8929 / NBRC 15157 / NCIMB 11770).